Consider the following 68-residue polypeptide: MAKVKMKTNRTAAKRLKITATGKVKYTKGGVSHYNTKKSSKRKRQGRKPQYVPKNLEHKVKALLPNDV.

A disordered region spans residues 29–68 (GGVSHYNTKKSSKRKRQGRKPQYVPKNLEHKVKALLPNDV). A compositionally biased stretch (basic residues) spans 35 to 47 (NTKKSSKRKRQGR).

This sequence belongs to the bacterial ribosomal protein bL35 family.

The chain is Large ribosomal subunit protein bL35 from Sulfurihydrogenibium sp. (strain YO3AOP1).